Here is a 335-residue protein sequence, read N- to C-terminus: MATFVSELEAAKKNLSEALGDNVKQYWANLKLWFKQKISKEEFDLEAHRLLTQDNVHSHNDFLLAILTRCQILVSTPEGAGSLPWTGGSAAKPGKPKGKKKLSSVRQKFDHRFQPQNPLSGAQQFVAKEPQGDDDLKLCSHTMMLPTRGQLEGRMIVTAYEHGLDNVTEEAVSAVVYAVENHLKDILTSVVSRRKAYRVRDGHFKYAFGSNVTPQPYLKNSVVAYNNLVEGPPAFSAPCANQSPASQPHPDDAEQQAAFLLACSGDTLPASLPPVNMYDLFEALQVHREVIPTHTVYALNIERIIMKLWHPNHEELQQDKVHRQRLAAKEGLLLC.

Belongs to the TADA1 family. Component of the STAGA transcription coactivator-HAT complex, at least composed of SUPT3H, GCN5L2, TAF5L, TAF6L, SUPT7L, TADA3L, TAD1L, TAF10, TAF12, TRRAP and TAF9.

The protein resides in the nucleus. Functionally, probably involved in transcriptional regulation. The polypeptide is Transcriptional adapter 1 (Tada1) (Mus musculus (Mouse)).